Here is a 251-residue protein sequence, read N- to C-terminus: Probable transcriptional regulatory protein NFA_37020 (251 aa).

It belongs to the TACO1 family.

Its subcellular location is the cytoplasm. The sequence is that of Probable transcriptional regulatory protein NFA_37020 from Nocardia farcinica (strain IFM 10152).